A 95-amino-acid polypeptide reads, in one-letter code: Small ubiquitin-related modifier 2-B (95 aa).

A Glycyl lysine isopeptide (Lys-Gly) (interchain with G-Cter in SUMO) cross-link involves residue K11. Residues 16–95 (DHINLKVAGQ…VFQQQTGGSY (80 aa)) enclose the Ubiquitin-like domain. Residue G93 forms a Glycyl lysine isopeptide (Gly-Lys) (interchain with K-? in acceptor proteins) linkage. A propeptide spanning residues 94–95 (SY) is cleaved from the precursor.

Belongs to the ubiquitin family. SUMO subfamily. As to quaternary structure, interacts with sae2 and ube2i. Covalently attached to a number of proteins, including top2. Polymeric chains can be formed through Lys-11 cross-linking. Post-translationally, cleavage of precursor form by a sentrin-specific protease is necessary for function.

The protein resides in the nucleus. In terms of biological role, ubiquitin-like protein that can be covalently attached to proteins as a monomer or as a lysine-linked polymer. Covalent attachment via an isopeptide bond to its substrates requires prior activation by the E1 complex sae1-sae2 and linkage to the E2 enzyme ube2i, and can be promoted by an E3 ligase such as pias1-4. This post-translational modification on lysine residues of proteins plays a crucial role in a number of cellular processes such as nuclear transport, DNA replication and repair, mitosis and signal transduction. Polymeric sumo2 chains are also susceptible to polyubiquitination which functions as a signal for proteasomal degradation of modified proteins. The sequence is that of Small ubiquitin-related modifier 2-B (sumo2-b) from Xenopus laevis (African clawed frog).